The following is a 360-amino-acid chain: Phospho-N-acetylmuramoyl-pentapeptide-transferase (360 aa).

Helical transmembrane passes span 26–46 (AILG…KLIE), 74–94 (MGGL…GDLG), 97–117 (YVWV…IDDY), 134–154 (YILQ…TAAN), 168–188 (VMPQ…VGSS), 199–219 (GLAI…AYLS), 236–256 (SGEL…FLWF), 263–283 (VFMG…IAVL), 288–308 (ILLV…ILQV), and 338–358 (VIVR…ATLK).

Belongs to the glycosyltransferase 4 family. MraY subfamily. It depends on Mg(2+) as a cofactor.

It is found in the cell inner membrane. The catalysed reaction is UDP-N-acetyl-alpha-D-muramoyl-L-alanyl-gamma-D-glutamyl-meso-2,6-diaminopimeloyl-D-alanyl-D-alanine + di-trans,octa-cis-undecaprenyl phosphate = di-trans,octa-cis-undecaprenyl diphospho-N-acetyl-alpha-D-muramoyl-L-alanyl-D-glutamyl-meso-2,6-diaminopimeloyl-D-alanyl-D-alanine + UMP. It functions in the pathway cell wall biogenesis; peptidoglycan biosynthesis. Catalyzes the initial step of the lipid cycle reactions in the biosynthesis of the cell wall peptidoglycan: transfers peptidoglycan precursor phospho-MurNAc-pentapeptide from UDP-MurNAc-pentapeptide onto the lipid carrier undecaprenyl phosphate, yielding undecaprenyl-pyrophosphoryl-MurNAc-pentapeptide, known as lipid I. In Shewanella baltica (strain OS195), this protein is Phospho-N-acetylmuramoyl-pentapeptide-transferase.